A 207-amino-acid chain; its full sequence is Ribosomal RNA small subunit methyltransferase G (207 aa).

Residues Gly-71, Phe-76, 122-123 (AE), and Arg-135 contribute to the S-adenosyl-L-methionine site.

This sequence belongs to the methyltransferase superfamily. RNA methyltransferase RsmG family.

It localises to the cytoplasm. Its function is as follows. Specifically methylates the N7 position of a guanine in 16S rRNA. The sequence is that of Ribosomal RNA small subunit methyltransferase G from Cytophaga hutchinsonii (strain ATCC 33406 / DSM 1761 / CIP 103989 / NBRC 15051 / NCIMB 9469 / D465).